We begin with the raw amino-acid sequence, 82 residues long: RNA-binding protein Hfq (82 aa).

The region spanning 10 to 70 (DAFLNQVRKD…ISTVAPLRPI (61 aa)) is the Sm domain.

The protein belongs to the Hfq family. In terms of assembly, homohexamer.

RNA chaperone that binds small regulatory RNA (sRNAs) and mRNAs to facilitate mRNA translational regulation in response to envelope stress, environmental stress and changes in metabolite concentrations. Also binds with high specificity to tRNAs. In Syntrophomonas wolfei subsp. wolfei (strain DSM 2245B / Goettingen), this protein is RNA-binding protein Hfq.